Reading from the N-terminus, the 464-residue chain is ATP synthase subunit beta (464 aa).

151–158 is an ATP binding site; that stretch reads GGAGVGKT.

The protein belongs to the ATPase alpha/beta chains family. In terms of assembly, F-type ATPases have 2 components, CF(1) - the catalytic core - and CF(0) - the membrane proton channel. CF(1) has five subunits: alpha(3), beta(3), gamma(1), delta(1), epsilon(1). CF(0) has three main subunits: a(1), b(2) and c(9-12). The alpha and beta chains form an alternating ring which encloses part of the gamma chain. CF(1) is attached to CF(0) by a central stalk formed by the gamma and epsilon chains, while a peripheral stalk is formed by the delta and b chains.

The protein localises to the cell membrane. The enzyme catalyses ATP + H2O + 4 H(+)(in) = ADP + phosphate + 5 H(+)(out). In terms of biological role, produces ATP from ADP in the presence of a proton gradient across the membrane. The catalytic sites are hosted primarily by the beta subunits. The polypeptide is ATP synthase subunit beta (Clostridium kluyveri (strain ATCC 8527 / DSM 555 / NBRC 12016 / NCIMB 10680 / K1)).